Consider the following 230-residue polypeptide: Nicotinamide riboside kinase 2 (230 aa).

9–17 (GMTNGGKTT) contributes to the ATP binding site. 2 residues coordinate Mg(2+): Thr16 and Asp35. Asp35 (proton acceptor) is an active-site residue. Substrate-binding positions include 35–38 (DDFF) and 54–55 (WD). Arg130 is a binding site for ATP. Substrate contacts are provided by residues Arg131 and 136–137 (YT). Residues 134-136 (RNY) and 174-176 (KSR) contribute to the ATP site. The tract at residues 191-230 (LLNRSQESAPSPARPARTQGPGRGCGHRTARPAASQQDSM) is disordered.

It belongs to the uridine kinase family. NRK subfamily. As to quaternary structure, monomer. Interacts with ITGB1 alone or when associated with alpha-7, but not with alpha-5. As to expression, predominantly expressed in skeletal muscle and, at a much lower level, in the heart (at protein level). No expression in brain, kidney, liver, lung, pancreas nor placenta.

The enzyme catalyses beta-nicotinamide D-riboside + ATP = beta-nicotinamide D-ribonucleotide + ADP + H(+). The catalysed reaction is beta-D-ribosylnicotinate + ATP = nicotinate beta-D-ribonucleotide + ADP + H(+). It participates in cofactor biosynthesis; NAD(+) biosynthesis. Functionally, catalyzes the phosphorylation of nicotinamide riboside (NR) and nicotinic acid riboside (NaR) to form nicotinamide mononucleotide (NMN) and nicotinic acid mononucleotide (NaMN). Reduces laminin matrix deposition and cell adhesion to laminin, but not to fibronectin. Involved in the regulation of PXN at the protein level and of PXN tyrosine phosphorylation. May play a role in the regulation of terminal myogenesis. The polypeptide is Nicotinamide riboside kinase 2 (NMRK2) (Homo sapiens (Human)).